A 407-amino-acid chain; its full sequence is Carbamoyl phosphate synthase small chain (407 aa).

The interval 1-205 (MTETTPKTAP…LQDGYGEQDA (205 aa)) is CPSase. L-glutamine is bound by residues serine 60, glycine 257, and glycine 259. The Glutamine amidotransferase type-1 domain maps to 209 to 397 (HVVALDFGVK…INLIRERKGQ (189 aa)). Catalysis depends on cysteine 286, which acts as the Nucleophile. Residues leucine 287, glutamine 290, asparagine 328, glycine 330, and phenylalanine 331 each contribute to the L-glutamine site. Residues histidine 370 and glutamate 372 contribute to the active site.

It belongs to the CarA family. As to quaternary structure, composed of two chains; the small (or glutamine) chain promotes the hydrolysis of glutamine to ammonia, which is used by the large (or ammonia) chain to synthesize carbamoyl phosphate. Tetramer of heterodimers (alpha,beta)4.

It carries out the reaction hydrogencarbonate + L-glutamine + 2 ATP + H2O = carbamoyl phosphate + L-glutamate + 2 ADP + phosphate + 2 H(+). The enzyme catalyses L-glutamine + H2O = L-glutamate + NH4(+). It functions in the pathway amino-acid biosynthesis; L-arginine biosynthesis; carbamoyl phosphate from bicarbonate: step 1/1. It participates in pyrimidine metabolism; UMP biosynthesis via de novo pathway; (S)-dihydroorotate from bicarbonate: step 1/3. Functionally, small subunit of the glutamine-dependent carbamoyl phosphate synthetase (CPSase). CPSase catalyzes the formation of carbamoyl phosphate from the ammonia moiety of glutamine, carbonate, and phosphate donated by ATP, constituting the first step of 2 biosynthetic pathways, one leading to arginine and/or urea and the other to pyrimidine nucleotides. The small subunit (glutamine amidotransferase) binds and cleaves glutamine to supply the large subunit with the substrate ammonia. The protein is Carbamoyl phosphate synthase small chain of Brucella canis (strain ATCC 23365 / NCTC 10854 / RM-666).